The chain runs to 259 residues: Ribonuclease HII (259 aa).

Positions threonine 70–glutamate 258 constitute an RNase H type-2 domain. Aspartate 76, glutamate 77, and aspartate 168 together coordinate a divalent metal cation.

Belongs to the RNase HII family. It depends on Mn(2+) as a cofactor. Mg(2+) is required as a cofactor.

The protein localises to the cytoplasm. It catalyses the reaction Endonucleolytic cleavage to 5'-phosphomonoester.. In terms of biological role, endonuclease that specifically degrades the RNA of RNA-DNA hybrids. The protein is Ribonuclease HII of Streptococcus pneumoniae serotype 19F (strain G54).